A 60-amino-acid chain; its full sequence is DSECLKEYGGDVGFGFCAPRIYPSFCVQRCRADKGALSGKCIWGQGSNVKCLCNFCRHEP.

4 cysteine pairs are disulfide-bonded: Cys-4–Cys-56, Cys-17–Cys-41, Cys-26–Cys-51, and Cys-30–Cys-53.

It belongs to the DEFL family. Protease inhibitor I18 (RTI/MTI-2) subfamily.

Its subcellular location is the secreted. Functionally, inhibits trypsin and chymotrypsin. This is Defensin-like protein 4 from Brassica napus (Rape).